Consider the following 84-residue polypeptide: RNA-binding protein Hfq (84 aa).

The region spanning 11–71 (DTFLNHVRKN…ISTIMPGHPV (61 aa)) is the Sm domain.

The protein belongs to the Hfq family. As to quaternary structure, homohexamer.

In terms of biological role, RNA chaperone that binds small regulatory RNA (sRNAs) and mRNAs to facilitate mRNA translational regulation in response to envelope stress, environmental stress and changes in metabolite concentrations. Also binds with high specificity to tRNAs. The protein is RNA-binding protein Hfq of Methylorubrum populi (strain ATCC BAA-705 / NCIMB 13946 / BJ001) (Methylobacterium populi).